A 290-amino-acid polypeptide reads, in one-letter code: Probable adenylate kinase 2, chloroplastic (290 aa).

The span at 1–10 shows a compositional bias: low complexity; the sequence is MASSMAATAT. The interval 1–37 is disordered; sequence MASSMAATATLSPPVLSAERPTVRGGLFLPPSPATSR. The transit peptide at 1 to 61 directs the protein to the chloroplast; the sequence is MASSMAATAT…ATRKPRSLPR (61 aa). 83 to 88 is an ATP binding site; it reads ASGKGT. Positions 103 to 132 are NMP; the sequence is SAGDLLRAEIAAGSENGKRAKEFMEKGQLV. AMP is bound by residues arginine 109, 130 to 132, 159 to 162, and glutamine 166; these read QLV and GYPR. Residues arginine 193, arginine 197, and 206 to 207 contribute to the ATP site; that span reads IY. The tract at residues 196 to 229 is LID; sequence GRRLDPVTGKIYHLKYSPPENEEIASRLTQRFDD. Arginine 226 and arginine 237 together coordinate AMP.

It belongs to the adenylate kinase family.

It localises to the plastid. The protein localises to the chloroplast. It catalyses the reaction AMP + ATP = 2 ADP. Catalyzes the reversible transfer of the terminal phosphate group between ATP and AMP. Plays an important role in cellular energy homeostasis and in adenine nucleotide metabolism. The sequence is that of Probable adenylate kinase 2, chloroplastic from Oryza sativa subsp. japonica (Rice).